The following is a 241-amino-acid chain: Carboxy-S-adenosyl-L-methionine synthase (241 aa).

S-adenosyl-L-methionine-binding positions include Tyr-38, 63-65 (GCS), 88-89 (DN), 116-117 (DI), Asn-131, and Arg-198.

It belongs to the class I-like SAM-binding methyltransferase superfamily. Cx-SAM synthase family. In terms of assembly, homodimer.

It carries out the reaction prephenate + S-adenosyl-L-methionine = carboxy-S-adenosyl-L-methionine + 3-phenylpyruvate + H2O. Its function is as follows. Catalyzes the conversion of S-adenosyl-L-methionine (SAM) to carboxy-S-adenosyl-L-methionine (Cx-SAM). This Actinobacillus pleuropneumoniae serotype 5b (strain L20) protein is Carboxy-S-adenosyl-L-methionine synthase.